We begin with the raw amino-acid sequence, 273 residues long: Large ribosomal subunit protein uL2 (273 aa).

The disordered stretch occupies residues 221 to 263 (RGTAMNPVDHPHGGGEGRNFGKHPVSPWGLKTKGKKTRRNKRT). Positions 252–263 (TKGKKTRRNKRT) are enriched in basic residues.

Belongs to the universal ribosomal protein uL2 family. Part of the 50S ribosomal subunit. Forms a bridge to the 30S subunit in the 70S ribosome.

In terms of biological role, one of the primary rRNA binding proteins. Required for association of the 30S and 50S subunits to form the 70S ribosome, for tRNA binding and peptide bond formation. It has been suggested to have peptidyltransferase activity; this is somewhat controversial. Makes several contacts with the 16S rRNA in the 70S ribosome. This Buchnera aphidicola subsp. Cinara cedri (strain Cc) protein is Large ribosomal subunit protein uL2.